We begin with the raw amino-acid sequence, 250 residues long: Ribonuclease PH (250 aa).

Phosphate-binding positions include Arg-86 and 124-126; that span reads GTR.

It belongs to the RNase PH family. In terms of assembly, homohexameric ring arranged as a trimer of dimers.

It carries out the reaction tRNA(n+1) + phosphate = tRNA(n) + a ribonucleoside 5'-diphosphate. Functionally, phosphorolytic 3'-5' exoribonuclease that plays an important role in tRNA 3'-end maturation. Removes nucleotide residues following the 3'-CCA terminus of tRNAs; can also add nucleotides to the ends of RNA molecules by using nucleoside diphosphates as substrates, but this may not be physiologically important. Probably plays a role in initiation of 16S rRNA degradation (leading to ribosome degradation) during starvation. This Shouchella clausii (strain KSM-K16) (Alkalihalobacillus clausii) protein is Ribonuclease PH.